We begin with the raw amino-acid sequence, 132 residues long: Protein NrdI (132 aa).

The protein belongs to the NrdI family.

Its function is as follows. Probably involved in ribonucleotide reductase function. The protein is Protein NrdI of Staphylococcus haemolyticus (strain JCSC1435).